The sequence spans 161 residues: RNA pyrophosphohydrolase (161 aa).

The Nudix hydrolase domain maps to 6 to 149 (GYRPNVGIIL…KREVYRRAMR (144 aa)). Residues 38-59 (GGIKKDESPEEALFRELKEEVG) carry the Nudix box motif.

The protein belongs to the Nudix hydrolase family. RppH subfamily. A divalent metal cation serves as cofactor.

Accelerates the degradation of transcripts by removing pyrophosphate from the 5'-end of triphosphorylated RNA, leading to a more labile monophosphorylated state that can stimulate subsequent ribonuclease cleavage. In Hahella chejuensis (strain KCTC 2396), this protein is RNA pyrophosphohydrolase.